The sequence spans 256 residues: Alcohol dehydrogenase (256 aa).

Phenylalanine 12–leucine 35 is an NAD(+) binding site. Serine 140 contacts substrate. The active-site Proton acceptor is tyrosine 153.

This sequence belongs to the short-chain dehydrogenases/reductases (SDR) family. In terms of assembly, homodimer.

It carries out the reaction a primary alcohol + NAD(+) = an aldehyde + NADH + H(+). It catalyses the reaction a secondary alcohol + NAD(+) = a ketone + NADH + H(+). The polypeptide is Alcohol dehydrogenase (Adh) (Drosophila yakuba (Fruit fly)).